A 184-amino-acid polypeptide reads, in one-letter code: dITP/XTP pyrophosphatase (184 aa).

8-13 (TGNKGK) lines the substrate pocket. Mg(2+)-binding residues include Glu37 and Asp66. The Proton acceptor role is filled by Asp66. Residues Ser67, 142-145 (FGYD), Lys163, and 168-169 (HR) each bind substrate.

It belongs to the HAM1 NTPase family. In terms of assembly, homodimer. It depends on Mg(2+) as a cofactor.

It carries out the reaction XTP + H2O = XMP + diphosphate + H(+). The catalysed reaction is dITP + H2O = dIMP + diphosphate + H(+). The enzyme catalyses ITP + H2O = IMP + diphosphate + H(+). Functionally, pyrophosphatase that catalyzes the hydrolysis of nucleoside triphosphates to their monophosphate derivatives, with a high preference for the non-canonical purine nucleotides XTP (xanthosine triphosphate), dITP (deoxyinosine triphosphate) and ITP. Seems to function as a house-cleaning enzyme that removes non-canonical purine nucleotides from the nucleotide pool, thus preventing their incorporation into DNA/RNA and avoiding chromosomal lesions. This chain is dITP/XTP pyrophosphatase, found in Methanosarcina mazei (strain ATCC BAA-159 / DSM 3647 / Goe1 / Go1 / JCM 11833 / OCM 88) (Methanosarcina frisia).